The sequence spans 158 residues: 6,7-dimethyl-8-ribityllumazine synthase (158 aa).

Residues Phe24, 58–60 (AFE), and 82–84 (AVI) contribute to the 5-amino-6-(D-ribitylamino)uracil site. 87-88 (GT) lines the (2S)-2-hydroxy-3-oxobutyl phosphate pocket. Residue His90 is the Proton donor of the active site. 5-amino-6-(D-ribitylamino)uracil is bound at residue Phe115. Arg129 contacts (2S)-2-hydroxy-3-oxobutyl phosphate.

The protein belongs to the DMRL synthase family. Forms an icosahedral capsid composed of 60 subunits, arranged as a dodecamer of pentamers.

The catalysed reaction is (2S)-2-hydroxy-3-oxobutyl phosphate + 5-amino-6-(D-ribitylamino)uracil = 6,7-dimethyl-8-(1-D-ribityl)lumazine + phosphate + 2 H2O + H(+). Its pathway is cofactor biosynthesis; riboflavin biosynthesis; riboflavin from 2-hydroxy-3-oxobutyl phosphate and 5-amino-6-(D-ribitylamino)uracil: step 1/2. Its function is as follows. Catalyzes the formation of 6,7-dimethyl-8-ribityllumazine by condensation of 5-amino-6-(D-ribitylamino)uracil with 3,4-dihydroxy-2-butanone 4-phosphate. This is the penultimate step in the biosynthesis of riboflavin. The polypeptide is 6,7-dimethyl-8-ribityllumazine synthase (Stutzerimonas stutzeri (strain A1501) (Pseudomonas stutzeri)).